The following is a 352-amino-acid chain: Protein RecA (352 aa).

66-73 (GPESSGKT) contacts ATP. A disordered region spans residues 330–352 (TKDDSKVATVDKANEEQAAEPVQ).

This sequence belongs to the RecA family.

The protein localises to the cytoplasm. Functionally, can catalyze the hydrolysis of ATP in the presence of single-stranded DNA, the ATP-dependent uptake of single-stranded DNA by duplex DNA, and the ATP-dependent hybridization of homologous single-stranded DNAs. It interacts with LexA causing its activation and leading to its autocatalytic cleavage. This chain is Protein RecA, found in Psychrobacter cryohalolentis (strain ATCC BAA-1226 / DSM 17306 / VKM B-2378 / K5).